A 447-amino-acid polypeptide reads, in one-letter code: Asparagine--tRNA ligase (447 aa).

The protein belongs to the class-II aminoacyl-tRNA synthetase family. As to quaternary structure, homodimer.

The protein resides in the cytoplasm. The enzyme catalyses tRNA(Asn) + L-asparagine + ATP = L-asparaginyl-tRNA(Asn) + AMP + diphosphate + H(+). In Lactococcus lactis subsp. lactis (strain IL1403) (Streptococcus lactis), this protein is Asparagine--tRNA ligase.